Consider the following 69-residue polypeptide: Light-harvesting protein B-1015 alpha chain (69 aa).

At 2-20 (ATEYRTASWKLWLILDPRR) the chain is on the cytoplasmic side. Residues 21-41 (VLTALFVYLTVIALLIHFGLL) form a helical membrane-spanning segment. Position 37 (His-37) interacts with a bacteriochlorophyll. Residues 42–59 (STDRLNWWEFQRGLPKAA) are Periplasmic-facing. A propeptide spanning residues 60–69 (SLVVVPPAVG) is cleaved from the precursor.

It belongs to the antenna complex alpha subunit family. The core complex is formed by different alpha and beta chains, binding bacteriochlorophyll molecules, and arranged most probably in tetrameric structures disposed around the reaction center. The non-pigmented gamma chains may constitute additional components.

Its subcellular location is the cell inner membrane. Its function is as follows. Antenna complexes are light-harvesting systems, which transfer the excitation energy to the reaction centers. In Blastochloris viridis (Rhodopseudomonas viridis), this protein is Light-harvesting protein B-1015 alpha chain (pufA).